The chain runs to 398 residues: Chalcone synthase 1 (398 aa).

Cys-167 is a catalytic residue.

The protein belongs to the thiolase-like superfamily. Chalcone/stilbene synthases family.

The catalysed reaction is (E)-4-coumaroyl-CoA + 3 malonyl-CoA + 3 H(+) = 2',4,4',6'-tetrahydroxychalcone + 3 CO2 + 4 CoA. The protein operates within secondary metabolite biosynthesis; flavonoid biosynthesis. In terms of biological role, the primary product of this enzyme is 4,2',4',6'-tetrahydroxychalcone (also termed naringenin-chalcone or chalcone) which can under specific conditions spontaneously isomerize into naringenin. The protein is Chalcone synthase 1 (CHS1) of Gerbera hybrida (Daisy).